The sequence spans 601 residues: DNA topoisomerase I, mitochondrial (601 aa).

The N-terminal 50 residues, 1–50 (MRVVRLLRLRAALTLLGEVPRRPASRGVPGSRRTQKGSGARWEKEKHEDG), are a transit peptide targeting the mitochondrion. The disordered stretch occupies residues 22 to 48 (RPASRGVPGSRRTQKGSGARWEKEKHE). Interaction with DNA stretches follow at residues 261-262 (KY), 324-329 (RAGNEK), and 421-423 (TAK). The region spanning 268–601 (CSKLKGETAW…LAMAGEDFEF (334 aa)) is the Topo IB-type catalytic domain. The active-site O-(3'-phospho-DNA)-tyrosine intermediate is the Tyr559.

The protein belongs to the type IB topoisomerase family. The cofactor is Ca(2+). It depends on Mg(2+) as a cofactor. In terms of tissue distribution, ubiquitous; highest in skeletal muscle, heart, brain and fetal liver.

Its subcellular location is the mitochondrion. It carries out the reaction ATP-independent breakage of single-stranded DNA, followed by passage and rejoining.. Its function is as follows. Releases the supercoiling and torsional tension of DNA introduced during duplication of mitochondrial DNA by transiently cleaving and rejoining one strand of the DNA duplex. Introduces a single-strand break via transesterification at a target site in duplex DNA. The scissile phosphodiester is attacked by the catalytic tyrosine of the enzyme, resulting in the formation of a DNA-(3'-phosphotyrosyl)-enzyme intermediate and the expulsion of a 5'-OH DNA strand. The free DNA strand then rotates around the intact phosphodiester bond on the opposing strand, thus removing DNA supercoils. Finally, in the religation step, the DNA 5'-OH attacks the covalent intermediate to expel the active-site tyrosine and restore the DNA phosphodiester backbone. This chain is DNA topoisomerase I, mitochondrial (TOP1MT), found in Homo sapiens (Human).